A 599-amino-acid polypeptide reads, in one-letter code: Beta-glucuronidase (599 aa).

2 residues coordinate D-glucuronate: Asp-160 and Asn-407. Glu-408 acts as the Proton donor in catalysis. 5 residues coordinate D-glucuronate: Asn-462, Tyr-468, Glu-501, Trp-546, and Lys-565. The active-site Nucleophile is the Glu-501. Residues 563–565 (NHK) carry the N-K motif motif.

It belongs to the glycosyl hydrolase 2 family.

The enzyme catalyses a beta-D-glucuronoside + H2O = D-glucuronate + an alcohol. With respect to regulation, inhibited by a set of synthetic compounds like thio-urea derivatives and analogs. Inhibitors of gut microbial beta-glucuronidases are expected to block the reactivation of glucuronidated cancer drugs, and to alleviate drug-induced GI toxicity. Functionally, displays beta-glucuronidase activity with the artificial substrate p-nitrophenyl-beta-D-glucuronide (PNPG). Is likely capable of scavenging glucuronate from a range of chemically distinct xenobiotic and endobiotic glucuronides present in the gastrointestinal (GI) tract, to be able to utilize these diverse sources of carbon. As part of the GI microbiome, this enzyme would be able to reactivate glucuronide drug conjugates, such reactivated compounds can significantly damage the GI tract. In Streptococcus agalactiae serotype V (strain ATCC BAA-611 / 2603 V/R), this protein is Beta-glucuronidase.